We begin with the raw amino-acid sequence, 468 residues long: Trehalose-2-sulfate acyltransferase PapA2 (468 aa).

This sequence belongs to the PapA acyltransferase family.

It carries out the reaction 2-O-sulfo-alpha,alpha-trehalose + hexadecanoyl-CoA = 2-O-sulfo-2'-O-hexadecanoyl-alpha,alpha-trehalose + CoA. In terms of biological role, required for the biosynthesis of sulfolipid-1 (SL-1), a major mycobacterial cell wall lipid. Catalyzes the acylation of trehalose-2-sulfate by adding the palmitoyl group at the 2'-position to yield the intermediate trehalose-2-sulfate-2'-palmitate (SL659). The polypeptide is Trehalose-2-sulfate acyltransferase PapA2 (papA2) (Mycobacterium bovis (strain ATCC BAA-935 / AF2122/97)).